Consider the following 42-residue polypeptide: Large ribosomal subunit protein bL36 (42 aa).

This sequence belongs to the bacterial ribosomal protein bL36 family.

The protein is Large ribosomal subunit protein bL36 of Ehrlichia chaffeensis (strain ATCC CRL-10679 / Arkansas).